The chain runs to 118 residues: Large ribosomal subunit protein bL20 (118 aa).

It belongs to the bacterial ribosomal protein bL20 family.

Functionally, binds directly to 23S ribosomal RNA and is necessary for the in vitro assembly process of the 50S ribosomal subunit. It is not involved in the protein synthesizing functions of that subunit. In Campylobacter concisus (strain 13826), this protein is Large ribosomal subunit protein bL20.